The following is a 458-amino-acid chain: Argininosuccinate lyase (458 aa).

The protein belongs to the lyase 1 family. Argininosuccinate lyase subfamily.

The protein resides in the cytoplasm. It catalyses the reaction 2-(N(omega)-L-arginino)succinate = fumarate + L-arginine. It participates in amino-acid biosynthesis; L-arginine biosynthesis; L-arginine from L-ornithine and carbamoyl phosphate: step 3/3. This Glaesserella parasuis serovar 5 (strain SH0165) (Haemophilus parasuis) protein is Argininosuccinate lyase.